The sequence spans 157 residues: MGFPKVERLLINYKTLDEFKKFKGCGAQELSMLEELQANIIENDSESPFYGIYYGGSLIARMSLYMKRNGGEPFEITGPYLELYKLEVLPTFQKQGFGQMLVNHAKQMQFPIKTIARIHSAGFWDKLNFNPVSVTDGDFYIWHPETNLNAVTNEESA.

The N-acetyltransferase domain occupies 9–154 (LLINYKTLDE…ETNLNAVTNE (146 aa)).

This is an uncharacterized protein from Bacillus cereus (strain ATCC 14579 / DSM 31 / CCUG 7414 / JCM 2152 / NBRC 15305 / NCIMB 9373 / NCTC 2599 / NRRL B-3711).